The primary structure comprises 601 residues: Trehalose synthase/amylase TreS (601 aa).

Residues 1–21 are disordered; sequence MNEAEHSVEHPPVQGSHVEGG. A substrate-binding site is contributed by Asp-98. Asn-140 is a Ca(2+) binding site. Residues His-141 and Gln-206 each contribute to the substrate site. A Ca(2+)-binding site is contributed by Asp-208. Residue Arg-236 coordinates substrate. The active-site Nucleophile is the Asp-238. Ca(2+)-binding residues include Tyr-242, Leu-243, and Glu-245. The active-site Proton donor is the Glu-280. Positions 349 and 350 each coordinate substrate.

It belongs to the glycosyl hydrolase 13 family. TreS subfamily. In terms of assembly, homohexamer.

The enzyme catalyses D-maltose = alpha,alpha-trehalose. It catalyses the reaction Endohydrolysis of (1-&gt;4)-alpha-D-glucosidic linkages in polysaccharides containing three or more (1-&gt;4)-alpha-linked D-glucose units.. Its pathway is glycan biosynthesis; glycogen biosynthesis. It functions in the pathway capsule biogenesis; capsule polysaccharide biosynthesis. Its function is as follows. Catalyzes the reversible interconversion of maltose and trehalose by transglucosylation. Also displays amylase activity, catalyzing the endohydrolysis of (1-&gt;4)-alpha-D-glucosidic linkages in glycogen and maltooligosaccharides such as maltoheptaose, to produce maltose which then can be converted to trehalose. TreS plays a key role in the utilization of trehalose for the production of glycogen and alpha-glucan via the TreS-Pep2 branch involved in the biosynthesis of maltose-1-phosphate (M1P). Might also function as a sensor and/or regulator of trehalose levels within the cell. Thus, when trehalose levels in the cell become dangerously low, TreS could expedite the conversion of glycogen to maltose via its amylase activity and then convert the maltose to trehalose; but this enzyme also could expedite or promote the conversion of trehalose to glycogen when cytoplasmic trehalose levels become too high. This is Trehalose synthase/amylase TreS from Mycobacterium tuberculosis (strain CDC 1551 / Oshkosh).